The following is a 407-amino-acid chain: 12S rRNA N(4)-cytidine methyltransferase METTL15 (407 aa).

Residues 100–102 (GGH), aspartate 119, phenylalanine 146, aspartate 169, and glutamine 176 each bind S-adenosyl-L-methionine. A Phosphoserine modification is found at serine 358.

It belongs to the methyltransferase superfamily. RsmH family.

It localises to the mitochondrion matrix. It carries out the reaction cytidine(839) in 12S rRNA + S-adenosyl-L-methionine = N(4)-methylcytidine(839) in 12S rRNA + S-adenosyl-L-homocysteine + H(+). Functionally, N4-methylcytidine (m4C) methyltransferase responsible for the methylation of position C839 in mitochondrial 12S rRNA. Involved in the stabilization of 12S rRNA folding, therefore facilitating the assembly of the mitochondrial small ribosomal subunits. The protein is 12S rRNA N(4)-cytidine methyltransferase METTL15 of Homo sapiens (Human).